The following is a 153-amino-acid chain: uncharacterized protein (153 aa).

The protein belongs to the RusA family.

This is an uncharacterized protein from Xylella fastidiosa (strain Temecula1 / ATCC 700964).